The following is a 572-amino-acid chain: Phosphoenolpyruvate-protein phosphotransferase (572 aa).

The Tele-phosphohistidine intermediate role is filled by His190. 2 residues coordinate phosphoenolpyruvate: Arg297 and Arg333. Residues Glu427 and Asp451 each coordinate Mg(2+). Residues 450 to 451 and Arg461 contribute to the phosphoenolpyruvate site; that span reads ND. Cys498 (proton donor) is an active-site residue.

It belongs to the PEP-utilizing enzyme family. As to quaternary structure, homodimer. Mg(2+) serves as cofactor.

The protein localises to the cytoplasm. The enzyme catalyses L-histidyl-[protein] + phosphoenolpyruvate = N(pros)-phospho-L-histidyl-[protein] + pyruvate. In terms of biological role, general (non sugar-specific) component of the phosphoenolpyruvate-dependent sugar phosphotransferase system (sugar PTS). This major carbohydrate active-transport system catalyzes the phosphorylation of incoming sugar substrates concomitantly with their translocation across the cell membrane. Enzyme I transfers the phosphoryl group from phosphoenolpyruvate (PEP) to the phosphoryl carrier protein (HPr). The polypeptide is Phosphoenolpyruvate-protein phosphotransferase (ptsI) (Mycoplasma genitalium (strain ATCC 33530 / DSM 19775 / NCTC 10195 / G37) (Mycoplasmoides genitalium)).